The primary structure comprises 391 residues: 5-amino-6-(D-ribitylamino)uracil--L-tyrosine 4-hydroxyphenyl transferase (391 aa).

One can recognise a Radical SAM core domain in the interval 55–302 (VTYVINRNIN…GAVARIYLGN (248 aa)). The [4Fe-4S] cluster site is built by cysteine 69, cysteine 73, and cysteine 76.

Belongs to the radical SAM superfamily. CofH family. Consists of two subunits, CofG and CofH. [4Fe-4S] cluster serves as cofactor.

It carries out the reaction 5-amino-6-(D-ribitylamino)uracil + L-tyrosine + S-adenosyl-L-methionine = 5-amino-5-(4-hydroxybenzyl)-6-(D-ribitylimino)-5,6-dihydrouracil + 2-iminoacetate + 5'-deoxyadenosine + L-methionine + H(+). Its pathway is cofactor biosynthesis; coenzyme F0 biosynthesis. Catalyzes the radical-mediated synthesis of 5-amino-5-(4-hydroxybenzyl)-6-(D-ribitylimino)-5,6-dihydrouracil from 5-amino-6-(D-ribitylamino)uracil and L-tyrosine. This Nostoc sp. (strain PCC 7120 / SAG 25.82 / UTEX 2576) protein is 5-amino-6-(D-ribitylamino)uracil--L-tyrosine 4-hydroxyphenyl transferase.